The following is a 328-amino-acid chain: Tetraacyldisaccharide 4'-kinase (328 aa).

Position 55–62 (55–62 (TAGGNGKT)) interacts with ATP.

The protein belongs to the LpxK family.

It carries out the reaction a lipid A disaccharide + ATP = a lipid IVA + ADP + H(+). It participates in glycolipid biosynthesis; lipid IV(A) biosynthesis; lipid IV(A) from (3R)-3-hydroxytetradecanoyl-[acyl-carrier-protein] and UDP-N-acetyl-alpha-D-glucosamine: step 6/6. Its function is as follows. Transfers the gamma-phosphate of ATP to the 4'-position of a tetraacyldisaccharide 1-phosphate intermediate (termed DS-1-P) to form tetraacyldisaccharide 1,4'-bis-phosphate (lipid IVA). This chain is Tetraacyldisaccharide 4'-kinase, found in Escherichia coli O6:K15:H31 (strain 536 / UPEC).